A 408-amino-acid chain; its full sequence is MKRIFRLVRRCHYSTEKRTNGPLVLVSNNQNIHFNLSLENFLLNNYNDLLKYLNINTIEKFNEPILFLWRNNRSIIIGKNQNIWSECNLKNIKEDGVLVARRFTGGGAVYHDLGNVCFTFLNNNINTSSNFLIILNTLKNHFNIEAKTQGRNDITVNDQKCSGSAFKKIKDVFLHHGTILINLEKNILNKYLTPDKIKYIKHGVSSVNARTINLSEINNNITCENLCIALIKEFTKFYEQNYKENINNIKNLENNINNSNFQNKEQININNTNENNLINNTNIIPNDITVHYIDQNNNITKNPEFLKYYNLLKDWDWCYGKTPKFQNHIWKQFTFGKLELFFNVSNGFIKDGNIFSDCLDINLIDHLKSIFNNDIKYSKEDISIFFKKLNVENKNYLDEVRSWILQEL.

Residues 1 to 18 (MKRIFRLVRRCHYSTEKR) constitute a mitochondrion transit peptide. Residues 60-242 (KFNEPILFLW…EFTKFYEQNY (183 aa)) enclose the BPL/LPL catalytic domain. Positions 102, 107, and 110 each coordinate ATP. Gly107 provides a ligand contact to (R)-lipoate. Asp153 lines the Mg(2+) pocket. Lys160 contacts ATP. Residue Lys160 participates in (R)-lipoate binding.

The protein belongs to the LplA family.

The protein resides in the mitochondrion. The enzyme catalyses L-lysyl-[lipoyl-carrier protein] + (R)-lipoate + ATP = N(6)-[(R)-lipoyl]-L-lysyl-[lipoyl-carrier protein] + AMP + diphosphate + H(+). It catalyses the reaction (R)-dihydrolipoate + L-lysyl-[lipoyl-carrier protein] + ATP = N(6)-[(R)-dihydrolipoyl]-L-lysyl-[lipoyl-carrier protein] + AMP + diphosphate + H(+). It carries out the reaction (R)-dihydrolipoate + ATP + H(+) = N(6)-[(R)-dihydrolipoyl]-5'-AMP + diphosphate. The catalysed reaction is N(6)-[(R)-dihydrolipoyl]-5'-AMP + L-lysyl-[lipoyl-carrier protein] = N(6)-[(R)-dihydrolipoyl]-L-lysyl-[lipoyl-carrier protein] + AMP + 2 H(+). It participates in protein modification; protein lipoylation via exogenous pathway; protein N(6)-(lipoyl)lysine from lipoate: step 1/2. Its pathway is protein modification; protein lipoylation via exogenous pathway; protein N(6)-(lipoyl)lysine from lipoate: step 2/2. With respect to regulation, inhibited by the lipoate analog 8-bromo-octanoate (BrO). Catalytic activity is increased in the presence of Mg(2+). Its function is as follows. Catalyzes both the ATP-dependent activation of exogenously supplied lipoate to lipoyl-AMP and the transfer of the activated lipoyl onto the lipoyl domains of lipoate-dependent enzymes. In the mitochondrion, functions as a redox switch between two lipoylation routes. Senses the oxidation state of lipoate and determines which downstream enzymes will be lipoylated. In low reducing conditions, uses lipoate in its oxidized ring form to lipoylate glycine cleavage system H-protein GCVH. In high reducing conditions and together with LipL2, uses reduced lipoate (dihydrolipoate) to lipoylate the E2 component of the branched chain alpha-ketoacid dehydrogenase complex BCKDH-E2/BCDH and the E2 component of the alpha-ketoglutarate dehydrogenase complex KDH. LipL1 is responsible for catalysing the activation of lipoate, forming lipoyl-AMP while LipL2 is required but is not capable of catalyzing this reaction. The sequence is that of Lipoate--protein ligase 1 from Plasmodium falciparum (isolate 3D7).